Consider the following 424-residue polypeptide: Exodeoxyribonuclease 7 large subunit (424 aa).

It belongs to the XseA family. As to quaternary structure, heterooligomer composed of large and small subunits.

It localises to the cytoplasm. It carries out the reaction Exonucleolytic cleavage in either 5'- to 3'- or 3'- to 5'-direction to yield nucleoside 5'-phosphates.. Bidirectionally degrades single-stranded DNA into large acid-insoluble oligonucleotides, which are then degraded further into small acid-soluble oligonucleotides. This chain is Exodeoxyribonuclease 7 large subunit, found in Cyanothece sp. (strain PCC 7425 / ATCC 29141).